The sequence spans 29 residues: Cytochrome b6-f complex subunit 8 (29 aa).

Residues 3–23 (TVSLAWAALMVVFTFSLSLVV) traverse the membrane as a helical segment.

Belongs to the PetN family. The 4 large subunits of the cytochrome b6-f complex are cytochrome b6, subunit IV (17 kDa polypeptide, PetD), cytochrome f and the Rieske protein, while the 4 small subunits are PetG, PetL, PetM and PetN. The complex functions as a dimer.

Its subcellular location is the plastid. It is found in the chloroplast thylakoid membrane. In terms of biological role, component of the cytochrome b6-f complex, which mediates electron transfer between photosystem II (PSII) and photosystem I (PSI), cyclic electron flow around PSI, and state transitions. In Chloranthus spicatus (Chulantree), this protein is Cytochrome b6-f complex subunit 8.